The chain runs to 89 residues: Sugar transporter SemiSWEET (89 aa).

The next 3 membrane-spanning stretches (helical) occupy residues Ile-4 to Ile-27, Ile-35 to Ile-55, and Phe-60 to Ile-82. A PQ-loop domain is found at Thr-7 to Asp-59.

In terms of assembly, homodimer.

The protein localises to the cell membrane. Functionally, the homodimer mediates transmembrane sugar transport down a concentration gradient. Transport is probably effected by rocking-type movements, where a cargo-binding cavity opens first on one and then on the other side of the membrane. This is Sugar transporter SemiSWEET from Escherichia coli (strain UMEA 3162-1).